The chain runs to 140 residues: Fluoride-specific ion channel FluC 1 (140 aa).

4 helical membrane passes run 4–24, 32–52, 70–90, and 99–119; these read LYLAVGGFCGAVGRYFLASFI, FPLATWIINLGGCLAMGFILT, TGMLGAFTTFSTFSVETLHLL, and LLYLFASLAGGLICMQTGIFL. Residues glycine 74 and threonine 77 each coordinate Na(+).

Belongs to the fluoride channel Fluc/FEX (TC 1.A.43) family.

The protein resides in the cell membrane. It catalyses the reaction fluoride(in) = fluoride(out). Its activity is regulated as follows. Na(+) is not transported, but it plays an essential structural role and its presence is essential for fluoride channel function. Its function is as follows. Fluoride-specific ion channel. Important for reducing fluoride concentration in the cell, thus reducing its toxicity. The chain is Fluoride-specific ion channel FluC 1 from Moorella thermoacetica (strain ATCC 39073 / JCM 9320).